A 476-amino-acid chain; its full sequence is Monofunctional riboflavin biosynthesis protein RIBA 2, chloroplastic (476 aa).

Residues 1 to 54 constitute a chloroplast transit peptide; that stretch reads MASLTLRCDSTHLLPSRDVVKGTKPFGTSLVYPRIISKKFNVRMRVIPEEGDVF. The interval 44-306 is DHBP synthase; sequence MRVIPEEGDV…IADLIRYRRK (263 aa). Residues 130-131, Asp-135, 245-249, and Glu-269 each bind D-ribulose 5-phosphate; these read RE and RAGHT. A Mg(2+)-binding site is contributed by Glu-131. His-248 serves as a coordination point for Mg(2+). An inactive GTP cyclohydrolase II region spans residues 307 to 476; it reads RERLVEFTAV…SGKVPLITTP (170 aa). Residues 357–361, Gln-376, 399–401, and Thr-450 contribute to the GTP site; these read RVHAE and ESK.

It in the N-terminal section; belongs to the DHBP synthase family. This sequence in the C-terminal section; belongs to the GTP cyclohydrolase II family. Requires Mg(2+) as cofactor. Mn(2+) serves as cofactor. In terms of tissue distribution, expressed in leaves, shoots, roots, flowers and siliques.

It localises to the plastid. Its subcellular location is the chloroplast. It catalyses the reaction D-ribulose 5-phosphate = (2S)-2-hydroxy-3-oxobutyl phosphate + formate + H(+). It participates in cofactor biosynthesis; riboflavin biosynthesis; 2-hydroxy-3-oxobutyl phosphate from D-ribulose 5-phosphate: step 1/1. In terms of biological role, involved in riboflavin biosynthesis. Catalyzes the conversion of D-ribulose 5-phosphate to formate and 3,4-dihydroxy-2-butanone 4-phosphate. RIBA2 and RIBA3 together are not able to complement the loss of function of RIBA1. This is Monofunctional riboflavin biosynthesis protein RIBA 2, chloroplastic (RIBA2) from Arabidopsis thaliana (Mouse-ear cress).